The chain runs to 203 residues: MKLAIAALLAGSAAAFAPAQSGKASTALNMAFESELGAQPPLGFFDPLGMLADADQERFDRLRYVEVKHGRIAHVAFLGQIVTRNGIHLSGNIDYAGNSFDSFPNGWAAISGPDAIPQAGLLQIVAFVGILELAVMKDVTGEGEFPGDFRNGALDFGWDTFDEETKLSKRAIELNNGRAAMMGILGLMVHEQLGGSIPIVGEM.

The N-terminal 30 residues, 1 to 30 (MKLAIAALLAGSAAAFAPAQSGKASTALNM), are a transit peptide targeting the chloroplast.

It belongs to the fucoxanthin chlorophyll protein family. The LHC complex of chromophytic algae is composed of fucoxanthin, chlorophyll A and C bound non-covalently by fucoxanthin chlorophyll proteins (FCPs). The ratio of pigments in this LHC is; fucoxanthin: chlorophyll C: chlorophyll A; (0.6-1): (0.1-0.3): (1).

The protein localises to the plastid. It is found in the chloroplast thylakoid membrane. Functionally, the light-harvesting complex (LHC) functions as a light receptor, it captures and delivers excitation energy to photosystems with which it is closely associated. Energy is transferred from the carotenoid and chlorophyll C (or B) to chlorophyll A and the photosynthetic reaction centers where it is used to synthesize ATP and reducing power. The chain is Fucoxanthin-chlorophyll a-c binding protein, chloroplastic (FCPA) from Trieres chinensis (Marine centric diatom).